Consider the following 259-residue polypeptide: 3-oxo-5-alpha-steroid 4-dehydrogenase 1 (259 aa).

5 helical membrane-spanning segments follow: residues 10–30 (LCLLDMLVYLEGFMAFVSIVG), 86–106 (VLLAMFLIHYVQRTLVFPVLI), 111–131 (PTLLVTFVLAFLFCTFNGYVQ), 146–166 (VTHPCFLTGFALWLVGMVINI), and 206–226 (WCGFALASWSLQGVVFALFTL).

This sequence belongs to the steroid 5-alpha reductase family. As to expression, liver and prostate (at a low level).

It is found in the microsome membrane. The protein resides in the endoplasmic reticulum membrane. It carries out the reaction a 3-oxo-5alpha-steroid + NADP(+) = a 3-oxo-Delta(4)-steroid + NADPH + H(+). The catalysed reaction is 5alpha-pregnane-3,20-dione + NADP(+) = progesterone + NADPH + H(+). The enzyme catalyses 17beta-hydroxy-5alpha-androstan-3-one + NADP(+) = testosterone + NADPH + H(+). It catalyses the reaction androst-4-ene-3,17-dione + NADPH + H(+) = 5alpha-androstan-3,17-dione + NADP(+). Functionally, converts testosterone into 5-alpha-dihydrotestosterone and progesterone or corticosterone into their corresponding 5-alpha-3-oxosteroids. It plays a central role in sexual differentiation and androgen physiology. This Rattus norvegicus (Rat) protein is 3-oxo-5-alpha-steroid 4-dehydrogenase 1.